A 136-amino-acid chain; its full sequence is ATP synthase F(0) complex subunit C1, mitochondrial (136 aa).

The N-terminal 61 residues, 1–61 (MQTAGALFIS…REFQTSVVSR (61 aa)), are a transit peptide targeting the mitochondrion. The chain crosses the membrane as a helical span at residues 77–97 (VGVAGSGAGIGTVFGSLIIGY). Lys104 carries the post-translational modification N6,N6,N6-trimethyllysine. The helical transmembrane segment at 112–132 (ILGFALSEAMGLFCLMVAFLI) threads the bilayer.

Belongs to the ATPase C chain family. As to quaternary structure, homooctamer; the c-ring consists of eight c subunits forming a circle, and each subunit adopts a hairpin shape. Component of the ATP synthase complex composed at least of ATP5F1A/subunit alpha, ATP5F1B/subunit beta, ATP5MC1/subunit c (homooctomer), MT-ATP6/subunit a, MT-ATP8/subunit 8, ATP5ME/subunit e, ATP5MF/subunit f, ATP5MG/subunit g, ATP5MK/subunit k, ATP5MJ/subunit j, ATP5F1C/subunit gamma, ATP5F1D/subunit delta, ATP5F1E/subunit epsilon, ATP5PF/subunit F6, ATP5PB/subunit b, ATP5PD/subunit d, ATP5PO/subunit OSCP. ATP synthase complex consists of a soluble F(1) head domain (subunits alpha(3) and beta(3)) - the catalytic core - and a membrane F(0) domain - the membrane proton channel (subunits c, a, 8, e, f, g, k and j). These two domains are linked by a central stalk (subunits gamma, delta, and epsilon) rotating inside the F1 region and a stationary peripheral stalk (subunits F6, b, d, and OSCP). Interacts with TMEM70 (homooligomer form); this interaction facilitates the oligomer formation of subunit c/ATP5MC1 (c-ring) and the c-ring membrane insertion and also protects ATP5MC1 against intramitochondrial proteolysis. Post-translationally, trimethylated by ATPSCKMT at Lys-104. Methylation is required for proper incorporation of the C subunit into the ATP synthase complex and mitochondrial respiration.

Its subcellular location is the mitochondrion membrane. It carries out the reaction H(+)(in) = H(+)(out). Subunit c, of the mitochondrial membrane ATP synthase complex (F(1)F(0) ATP synthase or Complex V) that produces ATP from ADP in the presence of a proton gradient across the membrane which is generated by electron transport complexes of the respiratory chain. ATP synthase complex consist of a soluble F(1) head domain - the catalytic core - and a membrane F(1) domain - the membrane proton channel. These two domains are linked by a central stalk rotating inside the F(1) region and a stationary peripheral stalk. During catalysis, ATP synthesis in the catalytic domain of F(1) is coupled via a rotary mechanism of the central stalk subunits to proton translocation. With the subunit a (MT-ATP6), forms the proton-conducting channel in the F(0) domain, that contains two crucial half-channels (inlet and outlet) that facilitate proton movement from the mitochondrial intermembrane space (IMS) into the matrix. Protons are taken up via the inlet half-channel and released through the outlet half-channel, following a Grotthuss mechanism. The polypeptide is ATP synthase F(0) complex subunit C1, mitochondrial (Homo sapiens (Human)).